A 66-amino-acid chain; its full sequence is Large ribosomal subunit protein eL24 (66 aa).

Residues C6, C9, C32, and C36 each contribute to the Zn(2+) site. The C4-type zinc-finger motif lies at 6–36 (CSFCGKTIEPGTGIMYVRKDGAILYFCSNKC).

Belongs to the eukaryotic ribosomal protein eL24 family. Part of the 50S ribosomal subunit. Forms a cluster with proteins L3 and L14. It depends on Zn(2+) as a cofactor.

In terms of biological role, binds to the 23S rRNA. The polypeptide is Large ribosomal subunit protein eL24 (Thermoplasma volcanium (strain ATCC 51530 / DSM 4299 / JCM 9571 / NBRC 15438 / GSS1)).